The following is a 424-amino-acid chain: Histidine--tRNA ligase (424 aa).

It belongs to the class-II aminoacyl-tRNA synthetase family. In terms of assembly, homodimer.

The protein localises to the cytoplasm. It carries out the reaction tRNA(His) + L-histidine + ATP = L-histidyl-tRNA(His) + AMP + diphosphate + H(+). In Staphylococcus epidermidis (strain ATCC 12228 / FDA PCI 1200), this protein is Histidine--tRNA ligase.